We begin with the raw amino-acid sequence, 100 residues long: UPF0298 protein lp_2135 (100 aa).

It belongs to the UPF0298 family.

Its subcellular location is the cytoplasm. The sequence is that of UPF0298 protein lp_2135 from Lactiplantibacillus plantarum (strain ATCC BAA-793 / NCIMB 8826 / WCFS1) (Lactobacillus plantarum).